Reading from the N-terminus, the 363-residue chain is RNA exonuclease NGL1 (363 aa).

The N-terminal 23 residues, methionine 1–lysine 23, are a transit peptide targeting the mitochondrion.

The protein belongs to the CCR4/nocturin family.

It localises to the mitochondrion. This is RNA exonuclease NGL1 (NGL1) from Saccharomyces cerevisiae (strain ATCC 204508 / S288c) (Baker's yeast).